Reading from the N-terminus, the 520-residue chain is Ribonuclease Y (520 aa).

The Extracellular segment spans residues 1 to 3 (MTP). A helical membrane pass occupies residues 4–24 (IMMVLISILLILLGLVVGYFV). Residues 25-520 (RKTIAEAKIA…RETRAVEYAK (496 aa)) lie on the Cytoplasmic side of the membrane. Residues 29–141 (AEAKIAGARG…KVDEMIRMQQ (113 aa)) adopt a coiled-coil conformation. Positions 210–273 (TVSVVNLPND…ETARIALDKL (64 aa)) constitute a KH domain. An HD domain is found at 336 to 429 (VLKHSMEVAF…VAAADALSAA (94 aa)).

Belongs to the RNase Y family. Homodimer. Component of a possible RNA degradosome complex composed of rny, rnjA, rnjB, pnp, pfkA and eno (although rnjA and rnjB's presence is unclear). Interacts with RNA helicase CshA which may also be a member of the RNA degradosome complex. Interacts with full-length dynamin-like protein DynA. Mg(2+) serves as cofactor. It depends on Mn(2+) as a cofactor. Requires Zn(2+) as cofactor.

Its subcellular location is the cell membrane. With respect to regulation, shows preference for transcripts carrying a monophosphate group at the 5' end. In terms of biological role, endoribonuclease that initiates mRNA decay. Initiates the decay of all SAM-dependent riboswitches, such as yitJ riboswitch. Involved in processing of the gapA operon mRNA, it cleaves between cggR and gapA. Is also the decay-initiating endonuclease for rpsO mRNA. Involved in degradation of type I toxin-antitoxin system bsrG/SR4 RNAs and a minor role in degradation of type I toxin-antitoxin system bsrE/SR5 degradation. This is Ribonuclease Y (rny) from Bacillus subtilis (strain 168).